The sequence spans 479 residues: Octopamine receptor (479 aa).

At 1-57 (MGQAATHDANNYTSINYTEIYDVIEDEKDVCAVADEPNIPCSFGISLAVPEWEAICT) the chain is on the extracellular side. Residues N11 and N16 are each glycosylated (N-linked (GlcNAc...) asparagine). Residues 58–80 (AIILTMIIISTVVGNILVILSVF) traverse the membrane as a helical segment. Over 81-90 (TYKPLRIVQN) the chain is Cytoplasmic. Residues 91–112 (FFIVSLAVADLTVAILVLPLNV) traverse the membrane as a helical segment. Residues 113-129 (AYSILGQWVFGIYVCKM) lie on the Extracellular side of the membrane. A helical transmembrane segment spans residues 130-150 (WLTCDIMCCTSSILNLCAIAL). At 151–170 (DRYWAITDPINYAQKRTLER) the chain is on the cytoplasmic side. Residues 171-193 (VLFMIGIVWILSLVISSPPLLGW) traverse the membrane as a helical segment. The Extracellular segment spans residues 194 to 218 (NDWPEVFEPDTPCRLTSQPGFVIFS). A helical transmembrane segment spans residues 219-240 (SSGSFYIPLVIMTVVYFEIYLA). Topologically, residues 241 to 407 (TKKRLRDRAK…LTRERRAART (167 aa)) are cytoplasmic. Residues 260-319 (GRNKYETKESDPNDQDSVSSDANPNEHQGGTRLVAENEKKHRTRKLTPKKKPKRRYWSKD) form a disordered region. Residues 274-287 (QDSVSSDANPNEHQ) show a composition bias toward polar residues. Residues 299 to 315 (KHRTRKLTPKKKPKRRY) show a composition bias toward basic residues. Residues 408–429 (LGIIMGVFVVCWLPFFVIYLVI) form a helical membrane-spanning segment. At 430–441 (PFCVSCCLSNKF) the chain is on the extracellular side. A helical membrane pass occupies residues 442–462 (INFITWLGYVNSALNPLIYTI). Over 463–479 (FNMDFRRAFKKLLFIKC) the chain is Cytoplasmic.

The protein belongs to the G-protein coupled receptor 1 family.

It localises to the cell membrane. Receptor for octopamine. Octopamine (OA) is a neurotransmitter, neurohormone, and neuromodulator in invertebrates. The activity of this receptor is mediated by G proteins which activate adenylyl cyclase. The sequence is that of Octopamine receptor from Bombyx mori (Silk moth).